Here is a 184-residue protein sequence, read N- to C-terminus: MSMKGKETMSKQNEKLVVGKLGSSYGIRGWLKVFSYTDNPESIFDYSPWYIDQKGEWVEYKVEGWKRHNKGWVVKLQGLDVREDAHLLTNFEIAIDPASLPELSEDEFYWRELFGMQVVTTNGYDLGVVTDMMETGSNDVLVVKANLKDAFGQKERLIPFLEEQVIKVVDRQAQRIEVDWDPAF.

The region spanning 105-184 (EDEFYWRELF…RIEVDWDPAF (80 aa)) is the PRC barrel domain.

Belongs to the RimM family. As to quaternary structure, binds ribosomal protein uS19.

The protein localises to the cytoplasm. Functionally, an accessory protein needed during the final step in the assembly of 30S ribosomal subunit, possibly for assembly of the head region. Essential for efficient processing of 16S rRNA. May be needed both before and after RbfA during the maturation of 16S rRNA. It has affinity for free ribosomal 30S subunits but not for 70S ribosomes. The chain is Ribosome maturation factor RimM from Vibrio cholerae serotype O1 (strain ATCC 39541 / Classical Ogawa 395 / O395).